Reading from the N-terminus, the 112-residue chain is uncharacterized protein (112 aa).

This is an uncharacterized protein from Saccharomyces cerevisiae (strain ATCC 204508 / S288c) (Baker's yeast).